Here is a 133-residue protein sequence, read N- to C-terminus: Alpha-amylase inhibitor/endochitinase (133 aa).

Catalysis depends on glutamate 30, which acts as the Proton donor.

The protein belongs to the glycosyl hydrolase 19 family. Chitinase class I subfamily.

The enzyme catalyses Random endo-hydrolysis of N-acetyl-beta-D-glucosaminide (1-&gt;4)-beta-linkages in chitin and chitodextrins.. In terms of biological role, this protein functions both as an alpha-amylase inhibitor and as a chitinase. This chain is Alpha-amylase inhibitor/endochitinase, found in Coix lacryma-jobi (Job's tears).